We begin with the raw amino-acid sequence, 145 residues long: Peptide methionine sulfoxide reductase MsrB (145 aa).

Residues 6 to 129 (KNERLQQLTD…NSAALRFIPV (124 aa)) form the MsrB domain. Catalysis depends on C118, which acts as the Nucleophile.

The protein belongs to the MsrB Met sulfoxide reductase family.

It catalyses the reaction L-methionyl-[protein] + [thioredoxin]-disulfide + H2O = L-methionyl-(R)-S-oxide-[protein] + [thioredoxin]-dithiol. The protein is Peptide methionine sulfoxide reductase MsrB of Listeria monocytogenes serotype 4b (strain CLIP80459).